The sequence spans 174 residues: UPF0316 protein Dhaf_3052 (174 aa).

The next 3 membrane-spanning stretches (helical) occupy residues Ile4–Ile24, Val35–Ile55, and Leu59–Gly79.

Belongs to the UPF0316 family.

It localises to the cell membrane. The sequence is that of UPF0316 protein Dhaf_3052 from Desulfitobacterium hafniense (strain DSM 10664 / DCB-2).